The following is a 426-amino-acid chain: Phosphomethylpyrimidine synthase (426 aa).

Substrate-binding positions include asparagine 65, methionine 94, tyrosine 123, histidine 162, 184-186 (SRG), 225-228 (DGMR), and glutamate 264. Residue histidine 268 coordinates Zn(2+). Residue tyrosine 291 participates in substrate binding. Histidine 332 contributes to the Zn(2+) binding site. [4Fe-4S] cluster contacts are provided by cysteine 408, cysteine 411, and cysteine 415.

It belongs to the ThiC family. [4Fe-4S] cluster is required as a cofactor.

The catalysed reaction is 5-amino-1-(5-phospho-beta-D-ribosyl)imidazole + S-adenosyl-L-methionine = 4-amino-2-methyl-5-(phosphooxymethyl)pyrimidine + CO + 5'-deoxyadenosine + formate + L-methionine + 3 H(+). It functions in the pathway cofactor biosynthesis; thiamine diphosphate biosynthesis. Its function is as follows. Catalyzes the synthesis of the hydroxymethylpyrimidine phosphate (HMP-P) moiety of thiamine from aminoimidazole ribotide (AIR) in a radical S-adenosyl-L-methionine (SAM)-dependent reaction. This chain is Phosphomethylpyrimidine synthase, found in Methanocaldococcus jannaschii (strain ATCC 43067 / DSM 2661 / JAL-1 / JCM 10045 / NBRC 100440) (Methanococcus jannaschii).